The primary structure comprises 751 residues: Polyribonucleotide nucleotidyltransferase (751 aa).

Residues D528 and D534 each contribute to the Mg(2+) site. The KH domain maps to 594-653; sequence PRVISVTVPVSKIGEVIGPKGKMINQIQEDTGTDISIEDDGTVYIGATDGPSAEAARSAI. The S1 motif domain maps to 665–737; that stretch reads GERYLGTVVK…DRGKLSLAPV (73 aa).

This sequence belongs to the polyribonucleotide nucleotidyltransferase family. The cofactor is Mg(2+).

The protein localises to the cytoplasm. The catalysed reaction is RNA(n+1) + phosphate = RNA(n) + a ribonucleoside 5'-diphosphate. Its function is as follows. Involved in mRNA degradation. Catalyzes the phosphorolysis of single-stranded polyribonucleotides processively in the 3'- to 5'-direction. The polypeptide is Polyribonucleotide nucleotidyltransferase (Kocuria rhizophila (strain ATCC 9341 / DSM 348 / NBRC 103217 / DC2201)).